Reading from the N-terminus, the 707-residue chain is Protein MICRORCHIDIA 7 (707 aa).

2 stretches are compositionally biased toward basic and acidic residues: residues 1–11 (MDNSIHVKREI) and 575–587 (DNRD…DREG). Disordered regions lie at residues 1-22 (MDNS…AGFP) and 568-619 (EKSA…SGKD). A compositionally biased stretch (polar residues) spans 590–613 (SIKTPTPASDKFYSSSYPNHNGDN). Positions 620-701 (GARLQEELRR…NKIKKMEGSK (82 aa)) form a coiled coil. The short motif at 633-640 (RRKALEVE) is the Nuclear localization signal element.

It belongs to the MORC ATPase protein family. Homodimer and heterodimer. Component of an RNA-directed DNA methylation (RdDM) complex. Forms homomeric complexes. It depends on Mg(2+) as a cofactor. Requires Mn(2+) as cofactor.

The protein localises to the nucleus. Its function is as follows. Exhibits ATPase activity. Binds DNA/RNA in a non-specific manner and exhibits endonuclease activity. Probably involved in DNA repair. Involved in RNA-directed DNA methylation (RdDM) as a component of the RdDM machinery and required for gene silencing. May also be involved in the regulation of chromatin architecture to maintain gene silencing. Together with MORC4, acts to suppress a wide set of non-methylated protein-coding genes, especially involved in pathogen response. Positive regulators of defense against the oomycete Hyaloperonospora arabidopsidis (Hpa). This Arabidopsis thaliana (Mouse-ear cress) protein is Protein MICRORCHIDIA 7.